The sequence spans 691 residues: Elongation factor G (691 aa).

The region spanning 8-282 (EQTRNIGIMA…AVIDYLPAPT (275 aa)) is the tr-type G domain. GTP is bound by residues 17 to 24 (AHIDAGKT), 81 to 85 (DTPGH), and 135 to 138 (NKMD).

It belongs to the TRAFAC class translation factor GTPase superfamily. Classic translation factor GTPase family. EF-G/EF-2 subfamily.

It localises to the cytoplasm. In terms of biological role, catalyzes the GTP-dependent ribosomal translocation step during translation elongation. During this step, the ribosome changes from the pre-translocational (PRE) to the post-translocational (POST) state as the newly formed A-site-bound peptidyl-tRNA and P-site-bound deacylated tRNA move to the P and E sites, respectively. Catalyzes the coordinated movement of the two tRNA molecules, the mRNA and conformational changes in the ribosome. The protein is Elongation factor G of Natranaerobius thermophilus (strain ATCC BAA-1301 / DSM 18059 / JW/NM-WN-LF).